The sequence spans 243 residues: Venom nerve growth factor 3 (243 aa).

The first 18 residues, 1-18 (MSMLCYTLIIAFLIGIWA), serve as a signal peptide directing secretion. The propeptide occupies 19-125 (APKSEDNVPL…ALNRNIRAKR (107 aa)). The segment covering 47 to 66 (GLKTSRNTDQRHPAPKKAED) has biased composition (basic and acidic residues). The interval 47–67 (GLKTSRNTDQRHPAPKKAEDQ) is disordered. Disulfide bonds link Cys139–Cys204, Cys182–Cys232, and Cys192–Cys234. Residues Asn148 and Asn151 are each glycosylated (N-linked (GlcNAc...) asparagine).

The protein belongs to the NGF-beta family. In terms of assembly, homodimer; non-covalently linked. Expressed by the venom gland.

The protein localises to the secreted. Functionally, nerve growth factor is important for the development and maintenance of the sympathetic and sensory nervous systems. It stimulates division and differentiation of sympathetic and embryonic sensory neurons as well as basal forebrain cholinergic neurons in the brain. Its relevance in the snake venom is not clear. However, it has been shown to inhibit metalloproteinase-dependent proteolysis of platelet glycoprotein Ib alpha, suggesting a metalloproteinase inhibition to prevent metalloprotease autodigestion and/or protection against prey proteases. Binds a lipid between the two protein chains in the homodimer. The lipid-bound form promotes histamine relase from mouse mast cells, contrary to the lipid-free form. This Tropidechis carinatus (Australian rough-scaled snake) protein is Venom nerve growth factor 3.